The following is a 479-amino-acid chain: Bifunctional protein HldE (479 aa).

The interval 1–319 (MTVILPDFLK…NVVQKYEYTK (319 aa)) is ribokinase. Position 195–198 (195–198 (NMSE)) interacts with ATP. The active site involves Asp-264. The tract at residues 346–479 (MTNGVFDILH…IDTMEINEIN (134 aa)) is cytidylyltransferase.

The protein in the N-terminal section; belongs to the carbohydrate kinase PfkB family. This sequence in the C-terminal section; belongs to the cytidylyltransferase family. As to quaternary structure, homodimer.

It catalyses the reaction D-glycero-beta-D-manno-heptose 7-phosphate + ATP = D-glycero-beta-D-manno-heptose 1,7-bisphosphate + ADP + H(+). The enzyme catalyses D-glycero-beta-D-manno-heptose 1-phosphate + ATP + H(+) = ADP-D-glycero-beta-D-manno-heptose + diphosphate. Its pathway is nucleotide-sugar biosynthesis; ADP-L-glycero-beta-D-manno-heptose biosynthesis; ADP-L-glycero-beta-D-manno-heptose from D-glycero-beta-D-manno-heptose 7-phosphate: step 1/4. It participates in nucleotide-sugar biosynthesis; ADP-L-glycero-beta-D-manno-heptose biosynthesis; ADP-L-glycero-beta-D-manno-heptose from D-glycero-beta-D-manno-heptose 7-phosphate: step 3/4. Functionally, catalyzes the phosphorylation of D-glycero-D-manno-heptose 7-phosphate at the C-1 position to selectively form D-glycero-beta-D-manno-heptose-1,7-bisphosphate. Its function is as follows. Catalyzes the ADP transfer from ATP to D-glycero-beta-D-manno-heptose 1-phosphate, yielding ADP-D-glycero-beta-D-manno-heptose. The polypeptide is Bifunctional protein HldE (Blochmanniella floridana).